The sequence spans 147 residues: Protein SOB FIVE-LIKE 2 (147 aa).

Residues 18–23 carry the SOFL-A motif; it reads SGWTMY. Residues 32 to 147 form a disordered region; the sequence is HHSEVVYEEE…ASRVKVSKTK (116 aa). Over residues 37-77 the composition is skewed to acidic residues; the sequence is VYEEEDDGFSVKEVDDDGDGDEDDDDDDDDDSSNNESDDSM. An SOFL-B motif is present at residues 76–85; the sequence is SMTSDASSWP. The span at 78–93 shows a compositional bias: polar residues; the sequence is TSDASSWPSTHQPPRS. Low complexity predominate over residues 96 to 106; it reads NHAAAKNSNAK. The segment covering 114 to 131 has biased composition (basic and acidic residues); the sequence is NRVRDRFSDEGEESELKA.

Belongs to the SOFL plant protein family. Predominantly expressed in the vascular tissues of seedlings, developing leaves, flowers and siliques, but barely detectable in roots and stems.

Its subcellular location is the cytoplasm. It localises to the nucleus. Functionally, involved in cytokinin-mediated development. Together with SOFL2, triggers the endogenous content of specific bioactive cytokinins derived from the biosynthetic intermediates trans-zeatin riboside monophosphate (tZRMP) and N(6)-(Delta(2)-isopentenyl)adenosine monophosphate (iPRMP) such as N-glucosides trans-zeatin 7-glucoside (tZ7G), cis-zeatin 7-glucoside (cZ7G) and N(6)-(Delta(2)-isopentenyl)adenine 7-glucoside (iP7G). The sequence is that of Protein SOB FIVE-LIKE 2 from Arabidopsis thaliana (Mouse-ear cress).